A 417-amino-acid polypeptide reads, in one-letter code: Phosphoglycerate kinase (417 aa).

Residues valine 23, aspartate 24, phenylalanine 25, asparagine 26, glutamine 39, arginine 40, serine 63, histidine 64, glycine 66, arginine 67, leucine 122, arginine 123, histidine 170, and arginine 171 each coordinate (2R)-3-phosphoglycerate. An ADP-binding site is contributed by glycine 214. Position 214 (glycine 214) interacts with CDP. AMP is bound by residues alanine 215 and lysine 216. Residue alanine 215 participates in ATP binding. Alanine 215 is a binding site for Mg(2+). Aspartate 219 is a binding site for CDP. A Mg(2+)-binding site is contributed by aspartate 219. Lysine 220 serves as a coordination point for AMP. Position 220 (lysine 220) interacts with ATP. Glycine 238 lines the ADP pocket. Glycine 238 contacts CDP. AMP-binding residues include glycine 239 and glycine 313. 2 residues coordinate ATP: glycine 239 and glycine 313. The CDP site is built by glycine 338 and phenylalanine 343. Residue phenylalanine 343 coordinates ADP. AMP is bound at residue glutamate 344. Glutamate 344, aspartate 375, and threonine 376 together coordinate ATP. Aspartate 375 serves as a coordination point for Mg(2+).

Belongs to the phosphoglycerate kinase family. In terms of assembly, monomer. It depends on Mg(2+) as a cofactor.

It is found in the cytoplasm. The protein resides in the mitochondrion. The enzyme catalyses (2R)-3-phosphoglycerate + ATP = (2R)-3-phospho-glyceroyl phosphate + ADP. It participates in carbohydrate degradation; glycolysis; pyruvate from D-glyceraldehyde 3-phosphate: step 2/5. Catalyzes one of the two ATP producing reactions in the glycolytic pathway via the reversible conversion of 1,3-diphosphoglycerate to 3-phosphoglycerate. Both L- and D- forms of purine and pyrimidine nucleotides can be used as substrates, but the activity is much lower on pyrimidines. Negatively regulates the biosynthesis of acetyl-CoA from pyruvate in the mitochondrion. This is Phosphoglycerate kinase (PGKA) from Penicillium citrinum.